The chain runs to 113 residues: Small ribosomal subunit protein bS6 (113 aa).

Belongs to the bacterial ribosomal protein bS6 family.

In terms of biological role, binds together with bS18 to 16S ribosomal RNA. This Ruthia magnifica subsp. Calyptogena magnifica protein is Small ribosomal subunit protein bS6.